We begin with the raw amino-acid sequence, 92 residues long: Small ribosomal subunit protein uS19 (92 aa).

It belongs to the universal ribosomal protein uS19 family.

Its function is as follows. Protein S19 forms a complex with S13 that binds strongly to the 16S ribosomal RNA. In Rhodopseudomonas palustris (strain HaA2), this protein is Small ribosomal subunit protein uS19.